A 58-amino-acid chain; its full sequence is Protein YecU (58 aa).

This Escherichia coli (strain K12) protein is Protein YecU.